Reading from the N-terminus, the 391-residue chain is Phosphoglycerate kinase (391 aa).

Substrate contacts are provided by residues 21-23 (DLN), Arg-36, 59-62 (HLGR), Arg-114, and Arg-147. Residues Lys-198, Glu-315, and 344-347 (GGDT) each bind ATP.

Belongs to the phosphoglycerate kinase family. As to quaternary structure, monomer.

The protein resides in the cytoplasm. It catalyses the reaction (2R)-3-phosphoglycerate + ATP = (2R)-3-phospho-glyceroyl phosphate + ADP. It participates in carbohydrate degradation; glycolysis; pyruvate from D-glyceraldehyde 3-phosphate: step 2/5. This is Phosphoglycerate kinase from Haemophilus ducreyi (strain 35000HP / ATCC 700724).